The chain runs to 211 residues: Large ribosomal subunit protein eL13 (211 aa).

Belongs to the eukaryotic ribosomal protein eL13 family. Component of the 60S large ribosomal subunit (LSU).

It localises to the cytoplasm. Functionally, component of the ribosome, a large ribonucleoprotein complex responsible for the synthesis of proteins in the cell. The small ribosomal subunit (SSU) binds messenger RNAs (mRNAs) and translates the encoded message by selecting cognate aminoacyl-transfer RNA (tRNA) molecules. The large subunit (LSU) contains the ribosomal catalytic site termed the peptidyl transferase center (PTC), which catalyzes the formation of peptide bonds, thereby polymerizing the amino acids delivered by tRNAs into a polypeptide chain. The nascent polypeptides leave the ribosome through a tunnel in the LSU and interact with protein factors that function in enzymatic processing, targeting, and the membrane insertion of nascent chains at the exit of the ribosomal tunnel. As part of the LSU, it is probably required for its formation and the maturation of rRNAs. This chain is Large ribosomal subunit protein eL13 (RPL13), found in Gallus gallus (Chicken).